Here is a 282-residue protein sequence, read N- to C-terminus: N-methyltransferase gliN (282 aa).

This sequence belongs to the methyltransferase superfamily. LaeA methyltransferase family.

Its pathway is mycotoxin biosynthesis. Its function is as follows. N-methyltransferase; part of the gene cluster that mediates the biosynthesis of gliotoxin, a member of the epipolythiodioxopiperazine (ETP) class of toxins characterized by a disulfide bridged cyclic dipeptide. The first step in gliotoxin biosynthesis is the condensation of serine and phenylalanine to form the cyclo-L-phenylalanyl-L-serine diketopiperazine (DKP) by the NRPS gliP. GliP is also able to produce the DKP cyclo-L-tryptophanyl-L-serine, suggesting that the substrate specificity of the first adenylation (A) domain in gliP is sufficiently relaxed to accommodate both L-Phe and L-Trp. The cytochrome P450 monooxygenase gliC has been shown to catalyze the subsequent hydroxylation of the alpha-carbon of L-Phe in cyclo-L-phenylalanyl-L-serine whereas the second cytochrome P450 enzyme, gliF, is presumably involved in the modification of the DKP side chain. The glutathione S-transferase (GST) gliG then forms a bis-glutathionylated biosynthetic intermediate which is responsible for the sulfurization of gliotoxin. This bis-glutathionylated intermediate is subsequently processed by the gamma-glutamyl cyclotransferase gliK to remove both gamma-glutamyl moieties. Subsequent processing via gliI yields a biosynthetic intermediate, which is N-methylated via the N-methyltransferase gliN, before the gliotoxin oxidoreductase gliT-mediated disulfide bridge closure. GliN-mediated amide methylation confers stability to ETP, damping the spontaneous formation of tri- and tetrasulfides. Intracellular dithiol gliotoxin oxidized by gliT is subsequently effluxed by gliA. Gliotoxin contributes to pathogenesis during invasive aspergillosis. In macrophages and neutrophils, gliotoxin showed inhibition of various different cell functions including cytokine production, antigen presentation, phagocytosis, and production of reactive oxygen species. This Aspergillus fumigatus (strain ATCC MYA-4609 / CBS 101355 / FGSC A1100 / Af293) (Neosartorya fumigata) protein is N-methyltransferase gliN.